The following is a 177-amino-acid chain: 3-hydroxyanthranilate 3,4-dioxygenase (177 aa).

Residue arginine 47 participates in O2 binding. The Fe cation site is built by histidine 51, glutamate 57, and histidine 95. Substrate is bound at residue glutamate 57. Residues arginine 99 and glutamate 110 each contribute to the substrate site. Residues cysteine 125, cysteine 128, cysteine 162, and cysteine 165 each contribute to the Fe cation site.

The protein belongs to the 3-HAO family. Homodimer. The cofactor is Fe(2+).

It carries out the reaction 3-hydroxyanthranilate + O2 = (2Z,4Z)-2-amino-3-carboxymuconate 6-semialdehyde. It participates in cofactor biosynthesis; NAD(+) biosynthesis; quinolinate from L-kynurenine: step 3/3. In terms of biological role, catalyzes the oxidative ring opening of 3-hydroxyanthranilate to 2-amino-3-carboxymuconate semialdehyde, which spontaneously cyclizes to quinolinate. The sequence is that of 3-hydroxyanthranilate 3,4-dioxygenase from Burkholderia cenocepacia (strain ATCC BAA-245 / DSM 16553 / LMG 16656 / NCTC 13227 / J2315 / CF5610) (Burkholderia cepacia (strain J2315)).